The chain runs to 76 residues: MARFYRRRKFCRFTAEGITHIDYKDVELLKQYISDNGKIVPSRITGTSTKYQRQLATAIKQARYLSLLPYTDNHQG.

It belongs to the bacterial ribosomal protein bS18 family. Part of the 30S ribosomal subunit. Forms a tight heterodimer with protein bS6.

Binds as a heterodimer with protein bS6 to the central domain of the 16S rRNA, where it helps stabilize the platform of the 30S subunit. This chain is Small ribosomal subunit protein bS18, found in Psychrobacter arcticus (strain DSM 17307 / VKM B-2377 / 273-4).